The sequence spans 231 residues: Putative transglycosylase H16_A0665 (231 aa).

The helical transmembrane segment at 8–28 (FIKLLVLAVIGGALLAAIAIL) threads the bilayer.

Belongs to the glycosyltransferase 51 family.

The protein localises to the secreted. It localises to the membrane. Its pathway is cell wall biogenesis; peptidoglycan biosynthesis. Functionally, cell wall formation. The sequence is that of Putative transglycosylase H16_A0665 from Cupriavidus necator (strain ATCC 17699 / DSM 428 / KCTC 22496 / NCIMB 10442 / H16 / Stanier 337) (Ralstonia eutropha).